Reading from the N-terminus, the 345-residue chain is Transcription initiation factor IIB (345 aa).

A TFIIB-type zinc finger spans residues 8–40 (VGRNCPHCSAVDSLQTDDVMGEVACTACALVVA). The Zn(2+) site is built by Cys-12, Cys-15, Cys-32, and Cys-35. Disordered regions lie at residues 59–89 (DVDH…HMSS) and 318–345 (PTAG…REET). Over residues 71 to 83 (TAATSAAGSLSAA) the composition is skewed to low complexity.

It belongs to the TFIIB family. Monomer. Interacts with RNA polymerase II subunits RPB1 and RPB2. Interacts with TBP; the interaction is direct.

The protein resides in the nucleus. In terms of biological role, specifically binds to the promoter of the spliced leader (SL) RNA gene and thus is essential for SLRNA transcription. This Trypanosoma brucei brucei protein is Transcription initiation factor IIB.